The primary structure comprises 365 residues: MADFVKLSIFGTVFEVTTRYVDLQPVGMGAFGLVCSAKDQLSGTSVAIKKIMKPFSTPVLSKRTYRELKLLKHLRHENIISLSDIFISPLEDIYFVTELLGTDLHRLLTSRPLEKQFIQYFLYQILRGLKYVHSAGVVHRDLKPSNILVNENCDLKICDFGLARIQDPQMTGYVSTRYYRAPEIMLTWQKYDVAVDIWSTGCIFAEMLEGKPLFPGKDHVNQFSIITELLGTPPDDVIQTIASENTLRFVQSLPKREKVPFSTKFPNADPVSLDLLEKMLVFDPRTRISAAEGLAHEYLAPYHDPTDEPVAAEVFDWSFNDADLPVDTWKVMMYSEILDFHNLGDISQNEAEGPVTGEVPAAPAS.

Residues tyrosine 20–leucine 299 enclose the Protein kinase domain. ATP is bound by residues valine 26–valine 34 and lysine 49. Aspartate 141 serves as the catalytic Proton acceptor. Threonine 171 bears the Phosphothreonine mark. The short motif at threonine 171 to tyrosine 173 is the TXY element. The residue at position 173 (tyrosine 173) is a Phosphotyrosine.

This sequence belongs to the protein kinase superfamily. Ser/Thr protein kinase family. MAP kinase subfamily. HOG1 sub-subfamily. Mg(2+) is required as a cofactor. In terms of processing, dually phosphorylated on Thr-171 and Tyr-173, which activates the enzyme. Phosphorylated by PBS2 after osmotic stress.

The protein localises to the cytoplasm. It is found in the nucleus. The enzyme catalyses L-seryl-[protein] + ATP = O-phospho-L-seryl-[protein] + ADP + H(+). The catalysed reaction is L-threonyl-[protein] + ATP = O-phospho-L-threonyl-[protein] + ADP + H(+). Its activity is regulated as follows. Activated by tyrosine and threonine phosphorylation. In terms of biological role, proline-directed serine/threonine-protein kinase involved in a signal transduction pathway that is activated by changes in the osmolarity of the extracellular environment. Controls osmotic regulation of transcription of target genes. Also involved in the response to UV radiation and mediates the sensitivity to fludioxonil, an agricultural fungicide. In Cryptococcus neoformans var. neoformans serotype D (strain B-3501A) (Filobasidiella neoformans), this protein is Mitogen-activated protein kinase HOG1 (HOG1).